The primary structure comprises 455 residues: MNKYFFIGIGGISMSAIALILKNQGFWVEGSDMQESATTKMLRENGINVYIGHDESHIHGDETVIYTAAISKDNPELLAAKRMNLKIYERAEFLGLLMKDFKNVITISGTHGKTTTTSMIGYILKKANYNPTVLVGAFVKQLGGNFVIGSKEYLVVEACEYVDSFLKFNPTIGVILNIDNDHLDYFKDIDSIKNSFKKFAQKIPTSGFLVVNYDDKNVKDIINQLNTQIICISTKEKTDIFADNISCSDGYYEFDVKNNNDEILAHIKLNIPGFHNVYNALAAFAVASKLGVESITIEQALSEFRGASRRLEKVGEFNGIYLYDDYAHHPTEIKATLATLKKISEGKVLAIFQPHTFSRLKTLLNEFAESLQLADKVIVTDVYAAREKNVFGITSEKLYLKLKEIGIDCEYISNFEDIACYAVKEAKKGDIIATIGAGDINKCLDIILKKAVVKS.

109–115 (GTHGKTT) is a binding site for ATP.

Belongs to the MurCDEF family.

Its subcellular location is the cytoplasm. It catalyses the reaction UDP-N-acetyl-alpha-D-muramate + L-alanine + ATP = UDP-N-acetyl-alpha-D-muramoyl-L-alanine + ADP + phosphate + H(+). It functions in the pathway cell wall biogenesis; peptidoglycan biosynthesis. Functionally, cell wall formation. This chain is UDP-N-acetylmuramate--L-alanine ligase, found in Caldicellulosiruptor bescii (strain ATCC BAA-1888 / DSM 6725 / KCTC 15123 / Z-1320) (Anaerocellum thermophilum).